Reading from the N-terminus, the 259-residue chain is Bisphosphoglycerate mutase (259 aa).

N-acetylserine is present on S2. Substrate contacts are provided by residues 10 to 17 (RHGEGAWN), 23 to 24 (CS), R62, 89 to 92 (ERHY), R100, and 116 to 117 (RR). H11 serves as the catalytic Tele-phosphohistidine intermediate. E89 acts as the Proton donor/acceptor in catalysis. T122 carries the post-translational modification Phosphothreonine. 189 to 190 (GN) lines the substrate pocket.

It belongs to the phosphoglycerate mutase family. BPG-dependent PGAM subfamily. Homodimer.

It carries out the reaction (2R)-3-phospho-glyceroyl phosphate = (2R)-2,3-bisphosphoglycerate + H(+). It catalyses the reaction (2R)-2-phosphoglycerate = (2R)-3-phosphoglycerate. With respect to regulation, at alkaline pH BPGM favors the synthase reaction; however, at lower pH the phosphatase reaction is dominant. Inhibited by citrate. Its function is as follows. Plays a major role in regulating hemoglobin oxygen affinity by controlling the levels of its allosteric effector 2,3-bisphosphoglycerate (2,3-BPG). Also exhibits mutase (EC 5.4.2.11) activity. This chain is Bisphosphoglycerate mutase (BPGM), found in Bos taurus (Bovine).